We begin with the raw amino-acid sequence, 545 residues long: CTP synthase (545 aa).

Residues 1 to 266 are amidoligase domain; sequence MTTRYIFVTG…DELVVKRFGI (266 aa). Serine 14 serves as a coordination point for CTP. Serine 14 is a binding site for UTP. ATP is bound by residues 15-20 and aspartate 72; that span reads SLGKGI. The Mg(2+) site is built by aspartate 72 and glutamate 140. CTP-binding positions include 147–149, 187–192, and lysine 223; these read DIE and KTKPTQ. UTP-binding positions include 187 to 192 and lysine 223; that span reads KTKPTQ. An ATP-binding site is contributed by 239–241; it reads KDV. Residues 291–542 enclose the Glutamine amidotransferase type-1 domain; that stretch reads TIGMVGKYIE…VAAATAYQKR (252 aa). Residue glycine 352 coordinates L-glutamine. Cysteine 379 acts as the Nucleophile; for glutamine hydrolysis in catalysis. L-glutamine contacts are provided by residues 380 to 383, glutamate 403, and arginine 470; that span reads LGLQ. Residues histidine 515 and glutamate 517 contribute to the active site.

It belongs to the CTP synthase family. As to quaternary structure, homotetramer.

The catalysed reaction is UTP + L-glutamine + ATP + H2O = CTP + L-glutamate + ADP + phosphate + 2 H(+). The enzyme catalyses L-glutamine + H2O = L-glutamate + NH4(+). It carries out the reaction UTP + NH4(+) + ATP = CTP + ADP + phosphate + 2 H(+). It functions in the pathway pyrimidine metabolism; CTP biosynthesis via de novo pathway; CTP from UDP: step 2/2. Allosterically activated by GTP, when glutamine is the substrate; GTP has no effect on the reaction when ammonia is the substrate. The allosteric effector GTP functions by stabilizing the protein conformation that binds the tetrahedral intermediate(s) formed during glutamine hydrolysis. Inhibited by the product CTP, via allosteric rather than competitive inhibition. Catalyzes the ATP-dependent amination of UTP to CTP with either L-glutamine or ammonia as the source of nitrogen. Regulates intracellular CTP levels through interactions with the four ribonucleotide triphosphates. The chain is CTP synthase from Shewanella sediminis (strain HAW-EB3).